The sequence spans 245 residues: Suppressor of aph-1 (245 aa).

The GYF domain occupies Asp-12–Gly-60. A disordered region spans residues Asn-126–Thr-166.

Functionally, involved in negative regulation of early and late embryonic Notch signaling. This is Suppressor of aph-1 from Caenorhabditis elegans.